A 164-amino-acid chain; its full sequence is Pheromone-binding protein (164 aa).

Positions 1-22 (MSIQGQIALALMVNMAVGSVDA) are cleaved as a signal peptide. Disulfide bonds link cysteine 41–cysteine 76, cysteine 72–cysteine 130, and cysteine 119–cysteine 139.

It belongs to the PBP/GOBP family. Homodimer. Antenna.

In terms of biological role, this major soluble protein in olfactory sensilla of male moths serves to solubilize the extremely hydrophobic pheromone molecules such as bombykol and to transport pheromone through the aqueous lymph to receptors located on olfactory cilia. The sequence is that of Pheromone-binding protein from Bombyx mori (Silk moth).